Consider the following 490-residue polypeptide: Protein nucleotidyltransferase YdiU (490 aa).

ATP contacts are provided by glycine 89, glycine 91, arginine 92, lysine 112, aspartate 124, glycine 125, arginine 175, and arginine 182. The active-site Proton acceptor is the aspartate 251. Mg(2+)-binding residues include asparagine 252 and aspartate 261. Residue aspartate 261 participates in ATP binding.

This sequence belongs to the SELO family. Requires Mg(2+) as cofactor. Mn(2+) is required as a cofactor.

It catalyses the reaction L-seryl-[protein] + ATP = 3-O-(5'-adenylyl)-L-seryl-[protein] + diphosphate. The catalysed reaction is L-threonyl-[protein] + ATP = 3-O-(5'-adenylyl)-L-threonyl-[protein] + diphosphate. The enzyme catalyses L-tyrosyl-[protein] + ATP = O-(5'-adenylyl)-L-tyrosyl-[protein] + diphosphate. It carries out the reaction L-histidyl-[protein] + UTP = N(tele)-(5'-uridylyl)-L-histidyl-[protein] + diphosphate. It catalyses the reaction L-seryl-[protein] + UTP = O-(5'-uridylyl)-L-seryl-[protein] + diphosphate. The catalysed reaction is L-tyrosyl-[protein] + UTP = O-(5'-uridylyl)-L-tyrosyl-[protein] + diphosphate. Nucleotidyltransferase involved in the post-translational modification of proteins. It can catalyze the addition of adenosine monophosphate (AMP) or uridine monophosphate (UMP) to a protein, resulting in modifications known as AMPylation and UMPylation. This Vibrio vulnificus (strain CMCP6) protein is Protein nucleotidyltransferase YdiU.